The primary structure comprises 20 residues: 44 kDa cell wall protein 2 (20 aa).

The protein resides in the secreted. Its subcellular location is the cell wall. This chain is 44 kDa cell wall protein 2, found in Solanum lycopersicum (Tomato).